The chain runs to 308 residues: NAD-dependent protein deacylase SIR4 (308 aa).

The transit peptide at 1–16 (MAATKLHPALRNAIRA) directs the protein to the mitochondrion. Residues 28–308 (TFDVQEGIKL…EVLPAALRQL (281 aa)) enclose the Deacetylase sirtuin-type domain. Residues 53–73 (GAGI…RPPH) and 129–132 (QNVD) each bind NAD(+). Catalysis depends on H147, which acts as the Proton acceptor. Zn(2+) is bound by residues C155, C158, C211, and C214. Residues 251–253 (GTS), 277–279 (NSG), and I297 contribute to the NAD(+) site.

Belongs to the sirtuin family. Class II subfamily. Zn(2+) is required as a cofactor.

The protein localises to the mitochondrion matrix. It catalyses the reaction N(6)-acetyl-L-lysyl-[protein] + NAD(+) + H2O = 2''-O-acetyl-ADP-D-ribose + nicotinamide + L-lysyl-[protein]. Its function is as follows. NAD-dependent protein deacylase. Catalyzes the NAD-dependent hydrolysis of acyl groups from lysine residues. The chain is NAD-dependent protein deacylase SIR4 from Monosiga brevicollis (Choanoflagellate).